The primary structure comprises 421 residues: Testin (421 aa).

The region spanning 92–199 (MILTNPVAAK…GDVKLPCEMD (108 aa)) is the PET domain. Positions 133 to 164 (EKQPVAGSEGAQYRKKQLAKQLPAHDQDPSKC) are disordered. Residues 155–164 (PAHDQDPSKC) show a composition bias toward basic and acidic residues. LIM zinc-binding domains lie at 234–297 (YSCY…CDSE), 299–359 (PRCA…NHAV), and 362–421 (QGCH…KMMS).

The protein belongs to the prickle / espinas / testin family. In terms of assembly, interacts via LIM domain 1 with ZYX. Interacts (via LIM domain 3) with ENAH and VASP. Interacts with ALKBH4, talin, actin, alpha-actinin, GRIP1 and PXN. Interacts (via LIM domain 2) with ACTL7A (via N-terminus). Heterodimer with ACTL7A; the heterodimer interacts with ENAH to form a heterotrimer.

Its subcellular location is the cytoplasm. The protein localises to the cell junction. The protein resides in the focal adhesion. Its function is as follows. Scaffold protein that may play a role in cell adhesion, cell spreading and in the reorganization of the actin cytoskeleton. Plays a role in the regulation of cell proliferation. May act as a tumor suppressor. The sequence is that of Testin (TES) from Saimiri boliviensis boliviensis (Bolivian squirrel monkey).